A 325-amino-acid polypeptide reads, in one-letter code: Pectinesterase A (325 aa).

The N-terminal stretch at 1-18 is a signal peptide; it reads MRVQSYLSLFSLVGAALC. N126 carries an N-linked (GlcNAc...) asparagine glycan. Substrate is bound at residue Q143. D166 acts as the Proton donor in catalysis. D187 functions as the Nucleophile in the catalytic mechanism. The substrate site is built by R247 and W249.

It belongs to the pectinesterase family.

Its subcellular location is the secreted. It catalyses the reaction [(1-&gt;4)-alpha-D-galacturonosyl methyl ester](n) + n H2O = [(1-&gt;4)-alpha-D-galacturonosyl](n) + n methanol + n H(+). It participates in glycan metabolism; pectin degradation; 2-dehydro-3-deoxy-D-gluconate from pectin: step 1/5. Its function is as follows. Involved in maceration and soft-rotting of plant tissue. Active against citrus pectin. The polypeptide is Pectinesterase A (pmeA) (Emericella nidulans (strain FGSC A4 / ATCC 38163 / CBS 112.46 / NRRL 194 / M139) (Aspergillus nidulans)).